The primary structure comprises 403 residues: Ribosomal RNA large subunit methyltransferase I (403 aa).

One can recognise a PUA domain in the interval 9-88 (YPRLVLSKGR…ESIDIAFFTR (80 aa)).

The protein belongs to the methyltransferase superfamily. RlmI family.

The protein resides in the cytoplasm. The catalysed reaction is cytidine(1962) in 23S rRNA + S-adenosyl-L-methionine = 5-methylcytidine(1962) in 23S rRNA + S-adenosyl-L-homocysteine + H(+). Its function is as follows. Specifically methylates the cytosine at position 1962 (m5C1962) of 23S rRNA. This Salmonella enteritidis PT4 (strain P125109) protein is Ribosomal RNA large subunit methyltransferase I.